A 171-amino-acid polypeptide reads, in one-letter code: Small ribosomal subunit protein uS5 (171 aa).

Positions 16 to 79 (LREKMISVNR…EEARRKLVKI (64 aa)) constitute an S5 DRBM domain.

The protein belongs to the universal ribosomal protein uS5 family. Part of the 30S ribosomal subunit. Contacts proteins S4 and S8.

With S4 and S12 plays an important role in translational accuracy. Functionally, located at the back of the 30S subunit body where it stabilizes the conformation of the head with respect to the body. The protein is Small ribosomal subunit protein uS5 of Thiobacillus denitrificans (strain ATCC 25259 / T1).